Here is a 282-residue protein sequence, read N- to C-terminus: Shikimate dehydrogenase (NADP(+)) (282 aa).

Residues 19-21 (SFS) and Thr-66 contribute to the shikimate site. The Proton acceptor role is filled by Lys-70. Residues Asn-91 and Asp-106 each contribute to the shikimate site. NADP(+)-binding positions include 130–134 (GAGGA), 152–157 (NRTVEK), Thr-196, Met-200, and Leu-224. Residue Tyr-226 participates in shikimate binding. NADP(+) is bound at residue Gly-247.

It belongs to the shikimate dehydrogenase family. In terms of assembly, homodimer.

The enzyme catalyses shikimate + NADP(+) = 3-dehydroshikimate + NADPH + H(+). It participates in metabolic intermediate biosynthesis; chorismate biosynthesis; chorismate from D-erythrose 4-phosphate and phosphoenolpyruvate: step 4/7. Involved in the biosynthesis of the chorismate, which leads to the biosynthesis of aromatic amino acids. Catalyzes the reversible NADPH linked reduction of 3-dehydroshikimate (DHSA) to yield shikimate (SA). The chain is Shikimate dehydrogenase (NADP(+)) from Methanocaldococcus jannaschii (strain ATCC 43067 / DSM 2661 / JAL-1 / JCM 10045 / NBRC 100440) (Methanococcus jannaschii).